Here is a 97-residue protein sequence, read N- to C-terminus: Co-chaperonin GroES (97 aa).

It belongs to the GroES chaperonin family. In terms of assembly, heptamer of 7 subunits arranged in a ring. Interacts with the chaperonin GroEL.

It localises to the cytoplasm. Its function is as follows. Together with the chaperonin GroEL, plays an essential role in assisting protein folding. The GroEL-GroES system forms a nano-cage that allows encapsulation of the non-native substrate proteins and provides a physical environment optimized to promote and accelerate protein folding. GroES binds to the apical surface of the GroEL ring, thereby capping the opening of the GroEL channel. The polypeptide is Co-chaperonin GroES (Photorhabdus laumondii subsp. laumondii (strain DSM 15139 / CIP 105565 / TT01) (Photorhabdus luminescens subsp. laumondii)).